Reading from the N-terminus, the 137-residue chain is Large ribosomal subunit protein uL16 (137 aa).

The protein belongs to the universal ribosomal protein uL16 family. Part of the 50S ribosomal subunit.

Its function is as follows. Binds 23S rRNA and is also seen to make contacts with the A and possibly P site tRNAs. The sequence is that of Large ribosomal subunit protein uL16 from Streptococcus uberis (strain ATCC BAA-854 / 0140J).